The following is a 189-amino-acid chain: UPF0301 protein PFLU_5755 (189 aa).

The protein belongs to the UPF0301 (AlgH) family.

This Pseudomonas fluorescens (strain SBW25) protein is UPF0301 protein PFLU_5755.